A 303-amino-acid polypeptide reads, in one-letter code: Plasmodesmata-located protein 1 (303 aa).

Residues 1–21 (MKLTYQFFIFWFFLPFFAISG) form the signal peptide. Residues 22–268 (DDDYKNLIFK…GEKRQHTERT (247 aa)) lie on the Extracellular side of the membrane. Gnk2-homologous domains lie at 27–136 (NLIF…SSGF) and 141–248 (GTEM…YYSH). Cystine bridges form between Cys-33/Cys-108, Cys-84/Cys-93, Cys-96/Cys-127, Cys-149/Cys-226, Cys-202/Cys-211, and Cys-214/Cys-239. The helical transmembrane segment at 269–289 (IALAVGGVFVLGFVIVCLLVL) threads the bilayer. The tract at residues 269–289 (IALAVGGVFVLGFVIVCLLVL) is necessary and sufficient for plasmodesmal targeting. Over 290–303 (RSAMKKKSNKYDAY) the chain is Cytoplasmic.

This sequence belongs to the cysteine-rich repeat secretory protein family. Plasmodesmata-located proteins (PDLD) subfamily. Interacts with AZI1. Interacts with PDLP5. Does not interact with DIR1. In terms of assembly, (Microbial infection) Interacts with Grapevine fanleaf virus (GFLV) 2B-MP. Interacts with Cauliflower mosaic virus (CaMV) movement protein. Highly expressed in cell suspension. Expressed in epidermal and spongy mesophyll cells, and the cell wall interface at the base of the leaf trichome (at protein level). Expressed in haustoria-containing cells.

The protein resides in the cell membrane. It is found in the cell junction. Its subcellular location is the plasmodesma. Functionally, modulates cell-to-cell trafficking. Required for systemic acquired resistance (SAR) which is mediated by the signaling molecules azelaic acid (AzA), glycerol-3-phosphate (G3P), and salicylic acid (SA). Required for the proper localization and stability of AZI1 which is involved in SAR. Mediates callose deposition during downy mildew fungal infection around haustoria. Haustoria are unicellular protrusions from hyphae and function as the site of molecular exchange of nutrients and effectors between host and pathogen. This is Plasmodesmata-located protein 1 from Arabidopsis thaliana (Mouse-ear cress).